Reading from the N-terminus, the 463-residue chain is MMAATVVSRIRTGTGRAPVMWLSLSLVAVAAAVATEQQVPLVLWSSDRNLWAPVADTHEGHITSDMQLSTYLDPALELGPRNVLLFLQDKLSIEDFTAYGGVFGNKQDSAFSNLENALDLAPSSLVLPAVDWYAISTLTTYLQEKLGASPLHVDLATLKELKLNASLPALLLIRLPYTASSGLMAPREVLTGNDEVIGQVLSTLKSEDVPYTAALTAVRPSRVARDITMVAGGLGRQLLQTQVASPAIHPPVSYNDTAPRILFWAQNFSVAYKDEWKDLTSLTFGVENLNLTGSFWNDSFAMLSLTYEPLFGATVTFKFILASRFYPVSARYWFAMERLEIHSNGSVAHFNVSQVTGPSIYSFHCEYVSSVSKKGNLLVTNVPSVWQMTLHNFQIQAFNVTGEQFSYASDCAGFFSPGIWMGLLTTLFMLFIFTYGLHMILSLKTMDRFDDHKGPTITLTQIV.

The signal sequence occupies residues 1–32; it reads MMAATVVSRIRTGTGRAPVMWLSLSLVAVAAA. Residues 33 to 225 constitute a propeptide that is removed on maturation; that stretch reads VATEQQVPLV…TAVRPSRVAR (193 aa). Residues 33-412 lie on the Lumenal side of the membrane; it reads VATEQQVPLV…EQFSYASDCA (380 aa). 8 N-linked (GlcNAc...) asparagine glycosylation sites follow: Asn164, Asn255, Asn267, Asn290, Asn297, Asn344, Asn351, and Asn399. A disulfide bridge connects residues Cys365 and Cys411. Residues 413–433 traverse the membrane as a helical segment; it reads GFFSPGIWMGLLTTLFMLFIF. Residues 434 to 463 are Cytoplasmic-facing; that stretch reads TYGLHMILSLKTMDRFDDHKGPTITLTQIV.

This sequence belongs to the vacuolar ATPase subunit S1 family. In terms of assembly, accessory component of the multisubunit proton-transporting vacuolar (V)-ATPase protein pump. Interacts (via N-terminus) with ATP6AP2 (via N-terminus). Interacts with RNASEK. Interacts with TMEM106B (via C-terminus). In terms of processing, N-glycosylated. Expressed in brain cortex (at protein level). Highly expressed in islets of Langerhans. Expressed in pancreatic acini, pituitary gland, adrenal gland, lung, brain and bone marrow.

The protein localises to the endoplasmic reticulum membrane. It is found in the endoplasmic reticulum-Golgi intermediate compartment membrane. Its subcellular location is the cytoplasmic vesicle. The protein resides in the secretory vesicle. It localises to the synaptic vesicle membrane. The protein localises to the clathrin-coated vesicle membrane. Accessory subunit of the proton-transporting vacuolar (V)-ATPase protein pump, which is required for luminal acidification of secretory vesicles. Guides the V-type ATPase into specialized subcellular compartments, such as neuroendocrine regulated secretory vesicles or the ruffled border of the osteoclast, thereby regulating its activity. Involved in membrane trafficking and Ca(2+)-dependent membrane fusion. May play a role in the assembly of the V-type ATPase complex. In aerobic conditions, involved in intracellular iron homeostasis, thus triggering the activity of Fe(2+) prolyl hydroxylase (PHD) enzymes, and leading to HIF1A hydroxylation and subsequent proteasomal degradation. In islets of Langerhans cells, may regulate the acidification of dense-core secretory granules. This is V-type proton ATPase subunit S1 (Atp6ap1) from Mus musculus (Mouse).